Consider the following 53-residue polypeptide: UPF0391 membrane protein BamMC406_6344 (53 aa).

2 helical membrane-spanning segments follow: residues 5–25 (AIIFFVIAIIAAVFGFGGIAA) and 30–50 (IAKILFYIFVVIFLVTLLLGV).

Belongs to the UPF0391 family.

The protein localises to the cell membrane. This Burkholderia ambifaria (strain MC40-6) protein is UPF0391 membrane protein BamMC406_6344.